The sequence spans 587 residues: NADH-quinone oxidoreductase subunit C/D (587 aa).

The NADH dehydrogenase I subunit C stretch occupies residues 1 to 178; sequence MAAPTTEHAE…EPFSLPDDVQ (178 aa). The tract at residues 202–587 is NADH dehydrogenase I subunit D; that stretch reads DFLFLNLGPN…IDFVMADVDR (386 aa).

It in the N-terminal section; belongs to the complex I 30 kDa subunit family. In the C-terminal section; belongs to the complex I 49 kDa subunit family. NDH-1 is composed of 13 different subunits. Subunits NuoB, CD, E, F, and G constitute the peripheral sector of the complex.

The protein resides in the cell inner membrane. It carries out the reaction a quinone + NADH + 5 H(+)(in) = a quinol + NAD(+) + 4 H(+)(out). Its function is as follows. NDH-1 shuttles electrons from NADH, via FMN and iron-sulfur (Fe-S) centers, to quinones in the respiratory chain. The immediate electron acceptor for the enzyme in this species is believed to be ubiquinone. Couples the redox reaction to proton translocation (for every two electrons transferred, four hydrogen ions are translocated across the cytoplasmic membrane), and thus conserves the redox energy in a proton gradient. The protein is NADH-quinone oxidoreductase subunit C/D of Methylococcus capsulatus (strain ATCC 33009 / NCIMB 11132 / Bath).